Consider the following 599-residue polypeptide: Elongation factor 4 (599 aa).

The 183-residue stretch at 5 to 187 (DLIRNFSIVA…AIVTRLPPPK (183 aa)) folds into the tr-type G domain. GTP-binding positions include 17–22 (DHGKST) and 134–137 (NKID).

The protein belongs to the TRAFAC class translation factor GTPase superfamily. Classic translation factor GTPase family. LepA subfamily.

It is found in the cell inner membrane. The catalysed reaction is GTP + H2O = GDP + phosphate + H(+). In terms of biological role, required for accurate and efficient protein synthesis under certain stress conditions. May act as a fidelity factor of the translation reaction, by catalyzing a one-codon backward translocation of tRNAs on improperly translocated ribosomes. Back-translocation proceeds from a post-translocation (POST) complex to a pre-translocation (PRE) complex, thus giving elongation factor G a second chance to translocate the tRNAs correctly. Binds to ribosomes in a GTP-dependent manner. The protein is Elongation factor 4 of Cereibacter sphaeroides (strain ATCC 17025 / ATH 2.4.3) (Rhodobacter sphaeroides).